The sequence spans 210 residues: MSDPMKTALSLVPMVIEQTNRGERAYDIFSRLLKERIIFINGPVEDGMAMLVCAQLLFLEAENPKKEISLYINSPGGVVTSGMAIYDTMQFIRPPVSTLCMGQAASMGSLLLTAGAKGHRFALPNARIMVHQPSGGFQGQASDIERHAQDIIKMKRRLNEIYVQHTGQGYEVIERTLDRDHFMTAEEAKAFGLVDDVIHYRAETEKEEKD.

The active-site Nucleophile is the Ser-106. His-131 is an active-site residue.

It belongs to the peptidase S14 family. Fourteen ClpP subunits assemble into 2 heptameric rings which stack back to back to give a disk-like structure with a central cavity, resembling the structure of eukaryotic proteasomes.

It is found in the cytoplasm. It catalyses the reaction Hydrolysis of proteins to small peptides in the presence of ATP and magnesium. alpha-casein is the usual test substrate. In the absence of ATP, only oligopeptides shorter than five residues are hydrolyzed (such as succinyl-Leu-Tyr-|-NHMec, and Leu-Tyr-Leu-|-Tyr-Trp, in which cleavage of the -Tyr-|-Leu- and -Tyr-|-Trp bonds also occurs).. Cleaves peptides in various proteins in a process that requires ATP hydrolysis. Has a chymotrypsin-like activity. Plays a major role in the degradation of misfolded proteins. The sequence is that of ATP-dependent Clp protease proteolytic subunit from Bartonella tribocorum (strain CIP 105476 / IBS 506).